A 559-amino-acid polypeptide reads, in one-letter code: Polypeptide N-acetylgalactosaminyltransferase 1 (559 aa).

Residues 1–8 (MRKFAYCK) lie on the Cytoplasmic side of the membrane. The chain crosses the membrane as a helical; Signal-anchor for type II membrane protein span at residues 9–28 (VVLATSLVWVLLDMFLLLYF). Residues 29–559 (SECNKCEEKK…LRNVTLPEIF (531 aa)) lie on the Lumenal side of the membrane. A glycan (N-linked (GlcNAc...) asparagine) is linked at Asn-95. 5 disulfide bridges follow: Cys-106-Cys-339, Cys-330-Cys-408, Cys-442-Cys-459, Cys-482-Cys-497, and Cys-523-Cys-540. Positions 115–225 (LPTTSVVIVF…VGWLEPLLAR (111 aa)) are catalytic subdomain A. Substrate is bound by residues Asp-156 and Arg-186. Mn(2+) is bound by residues Asp-209 and His-211. The segment at 285–347 (PVRTPTMAGG…TCSHVGHVFR (63 aa)) is catalytic subdomain B. A substrate-binding site is contributed by Trp-316. His-344 contributes to the Mn(2+) binding site. Substrate contacts are provided by Arg-347 and Tyr-352. Positions 429–551 (FSLGEIRNVE…GSRSQQWLLR (123 aa)) constitute a Ricin B-type lectin domain. N-linked (GlcNAc...) asparagine glycosylation occurs at Asn-552.

This sequence belongs to the glycosyltransferase 2 family. GalNAc-T subfamily. Mn(2+) is required as a cofactor. Heart, brain, spleen, liver, skeletal muscle and kidney.

The protein localises to the golgi apparatus. It localises to the golgi stack membrane. It is found in the secreted. The enzyme catalyses L-seryl-[protein] + UDP-N-acetyl-alpha-D-galactosamine = a 3-O-[N-acetyl-alpha-D-galactosaminyl]-L-seryl-[protein] + UDP + H(+). It catalyses the reaction L-threonyl-[protein] + UDP-N-acetyl-alpha-D-galactosamine = a 3-O-[N-acetyl-alpha-D-galactosaminyl]-L-threonyl-[protein] + UDP + H(+). Its pathway is protein modification; protein glycosylation. Catalyzes the initial reaction in O-linked oligosaccharide biosynthesis, the transfer of an N-acetyl-D-galactosamine residue to a serine or threonine residue on the protein receptor. Has a broad spectrum of substrates such as apomucin-, MUC5AC-, MUC1- and MUC2-derived peptides. The chain is Polypeptide N-acetylgalactosaminyltransferase 1 from Rattus norvegicus (Rat).